A 375-amino-acid chain; its full sequence is Tyrosine--tRNA ligase (375 aa).

Residues tyrosine 37, tyrosine 168, glutamine 172, aspartate 175, and glutamine 190 each coordinate L-tyrosine. A 'KMSKS' region motif is present at residues 251–255 (KMSKS). An ATP-binding site is contributed by lysine 254.

Belongs to the class-I aminoacyl-tRNA synthetase family. TyrS type 4 subfamily. As to quaternary structure, homodimer.

It is found in the cytoplasm. The enzyme catalyses tRNA(Tyr) + L-tyrosine + ATP = L-tyrosyl-tRNA(Tyr) + AMP + diphosphate + H(+). Its function is as follows. Catalyzes the attachment of tyrosine to tRNA(Tyr) in a two-step reaction: tyrosine is first activated by ATP to form Tyr-AMP and then transferred to the acceptor end of tRNA(Tyr). The chain is Tyrosine--tRNA ligase from Thermococcus onnurineus (strain NA1).